Reading from the N-terminus, the 171-residue chain is ATP synthase subunit delta (171 aa).

It belongs to the ATPase delta chain family. F-type ATPases have 2 components, F(1) - the catalytic core - and F(0) - the membrane proton channel. F(1) has five subunits: alpha(3), beta(3), gamma(1), delta(1), epsilon(1). F(0) has three main subunits: a(1), b(2) and c(10-14). The alpha and beta chains form an alternating ring which encloses part of the gamma chain. F(1) is attached to F(0) by a central stalk formed by the gamma and epsilon chains, while a peripheral stalk is formed by the delta and b chains.

It localises to the cell membrane. In terms of biological role, f(1)F(0) ATP synthase produces ATP from ADP in the presence of a proton or sodium gradient. F-type ATPases consist of two structural domains, F(1) containing the extramembraneous catalytic core and F(0) containing the membrane proton channel, linked together by a central stalk and a peripheral stalk. During catalysis, ATP synthesis in the catalytic domain of F(1) is coupled via a rotary mechanism of the central stalk subunits to proton translocation. Its function is as follows. This protein is part of the stalk that links CF(0) to CF(1). It either transmits conformational changes from CF(0) to CF(1) or is implicated in proton conduction. This chain is ATP synthase subunit delta, found in Acholeplasma laidlawii (strain PG-8A).